A 416-amino-acid chain; its full sequence is Pectin acetylesterase 10 (416 aa).

A signal peptide spans 1 to 20; it reads MRKLFLLGFIVAGLVLGNEA. The N-linked (GlcNAc...) asparagine glycan is linked to N27. Residues S198, D294, and H361 each act as charge relay system in the active site.

Belongs to the pectinacetylesterase family.

Its subcellular location is the secreted. It localises to the cell wall. Its function is as follows. Hydrolyzes acetyl esters in homogalacturonan regions of pectin. In type I primary cell wall, galacturonic acid residues of pectin can be acetylated at the O-2 and O-3 positions. Decreasing the degree of acetylation of pectin gels in vitro alters their physical properties. This Arabidopsis thaliana (Mouse-ear cress) protein is Pectin acetylesterase 10.